The sequence spans 147 residues: Hemoglobin subunit beta-1 (147 aa).

A Globin domain is found at 3–147 (EWTATERTHI…VVSALGRQYH (145 aa)). The heme b site is built by His-64 and His-93.

The protein belongs to the globin family. As to quaternary structure, hb 1 is a heterotetramer of two alpha-1 and two beta-1 chains. Hb 2 is a heterotetramer of two alpha-2 and two beta-1 chains. In terms of tissue distribution, red blood cells.

Involved in oxygen transport from gills to the various peripheral tissues. This Boreogadus saida (Polar cod) protein is Hemoglobin subunit beta-1 (hbb1).